The chain runs to 151 residues: Ribosome maturation factor RimP (151 aa).

Belongs to the RimP family.

It localises to the cytoplasm. In terms of biological role, required for maturation of 30S ribosomal subunits. This chain is Ribosome maturation factor RimP, found in Shewanella oneidensis (strain ATCC 700550 / JCM 31522 / CIP 106686 / LMG 19005 / NCIMB 14063 / MR-1).